Consider the following 70-residue polypeptide: Guanine nucleotide-binding protein G(I)/G(S)/G(O) subunit gamma-8 (70 aa).

Position 67 is a cysteine methyl ester (Cys-67). Cys-67 carries S-geranylgeranyl cysteine lipidation. The propeptide at Thr-68–Leu-70 is removed in mature form.

The protein belongs to the G protein gamma family. G proteins are composed of 3 units, alpha, beta and gamma. In terms of tissue distribution, detected in the olfactory epithelium, the vomeronasal epithelium and, to a lesser extent, the olfactory bulb.

The protein resides in the cell membrane. Functionally, guanine nucleotide-binding proteins (G proteins) are involved as a modulator or transducer in various transmembrane signaling systems. The beta and gamma chains are required for the GTPase activity, for replacement of GDP by GTP, and for G protein-effector interaction. This subunit may have a very specific role in the development and turnover of olfactory and vomeronasal neurons. The sequence is that of Guanine nucleotide-binding protein G(I)/G(S)/G(O) subunit gamma-8 (Gng8) from Rattus norvegicus (Rat).